We begin with the raw amino-acid sequence, 957 residues long: Melanoma-associated antigen E1 (957 aa).

The segment at 1-433 (MSLVSQNSRR…RNPSKCSIVL (433 aa)) is disordered. 2 stretches are compositionally biased toward polar residues: residues 85 to 96 (SEASSASGQPTV) and 104 to 130 (LLAT…SVTL). Positions 138 to 156 (TSRPPTSSEEPSTSVPATP) are enriched in low complexity. Composition is skewed to polar residues over residues 158 to 177 (EGTS…TSVV), 220 to 232 (LSTS…TEGL), 256 to 306 (RSTT…GPST), 328 to 344 (LSTS…STSV), 364 to 380 (RSTS…DTSV), and 414 to 428 (TLFS…NPSK). 2 consecutive MAGE domains span residues 491-690 (MEQN…YNEA) and 745-936 (LESK…YREA). Residues 743–957 (SRLESKARKL…HRQFFVHNFR (215 aa)) are interaction with DTNA.

In terms of assembly, interacts with DTNA. Interacts with TRIM28.

The protein resides in the cytoplasm. The protein localises to the perinuclear region. It is found in the nucleus. It localises to the cell membrane. Functionally, may enhance ubiquitin ligase activity of RING-type zinc finger-containing E3 ubiquitin-protein ligases. Proposed to act through recruitment and/or stabilization of the Ubl-conjugating enzyme (E2) at the E3:substrate complex. The chain is Melanoma-associated antigen E1 (MAGEE1) from Macaca fascicularis (Crab-eating macaque).